Here is a 258-residue protein sequence, read N- to C-terminus: MSSLLEKTRQLNKILQKSGAEPVVFDDICNLLSEVLSCNVYIISKKGKILGYDLSTGFECQTVRDKVVPEKRFPEHYNNKLLNVHGTKSNLENQGECVFESGEDCGVKNKLTTIVPINGNRERLGTLLLARFDVPFTDDDLIISEYSATIIGLEILRSKQDEIEEEARKKAVVQLAIGTLSYSELEAVEHIFNELDGPEGLLVASKIADKVGITRSVIVNALRKFESAGVIESRSLGMKGTHIKILNDRLLEELKKIK.

The interval 1–156 (MSSLLEKTRQ…SATIIGLEIL (156 aa)) is GAF domain. The segment at residues 204–223 (ASKIADKVGITRSVIVNALR) is a DNA-binding region (H-T-H motif).

It belongs to the CodY family.

It localises to the cytoplasm. In terms of biological role, DNA-binding global transcriptional regulator which is involved in the adaptive response to starvation and acts by directly or indirectly controlling the expression of numerous genes in response to nutrient availability. During rapid exponential growth, CodY is highly active and represses genes whose products allow adaptation to nutrient depletion. The polypeptide is Global transcriptional regulator CodY (Clostridium tetani (strain Massachusetts / E88)).